A 72-amino-acid chain; its full sequence is UPF0270 protein plu0398 (72 aa).

Belongs to the UPF0270 family.

This is UPF0270 protein plu0398 from Photorhabdus laumondii subsp. laumondii (strain DSM 15139 / CIP 105565 / TT01) (Photorhabdus luminescens subsp. laumondii).